Reading from the N-terminus, the 239-residue chain is Dephospho-CoA kinase (239 aa).

The region spanning 3–206 (IIGLTGSIAS…GGEGGEPAAG (204 aa)) is the DPCK domain. 11-16 (ASGKST) contributes to the ATP binding site. The segment at 197-239 (GGEGGEPAAGSSAHHGAGSVDPGAGPCDGPGAAPEAERRGGDR) is disordered. A compositionally biased stretch (low complexity) spans 204–230 (AAGSSAHHGAGSVDPGAGPCDGPGAAP).

Belongs to the CoaE family.

It localises to the cytoplasm. The catalysed reaction is 3'-dephospho-CoA + ATP = ADP + CoA + H(+). It functions in the pathway cofactor biosynthesis; coenzyme A biosynthesis; CoA from (R)-pantothenate: step 5/5. Its function is as follows. Catalyzes the phosphorylation of the 3'-hydroxyl group of dephosphocoenzyme A to form coenzyme A. The chain is Dephospho-CoA kinase from Symbiobacterium thermophilum (strain DSM 24528 / JCM 14929 / IAM 14863 / T).